Reading from the N-terminus, the 161-residue chain is Non-secretory ribonuclease (161 aa).

A signal peptide spans 1–27 (MVPKLFTSQICLLLLLGLLAVEGSLHV). C-linked (Man) tryptophan glycosylation occurs at W34. The active-site Proton acceptor is the H42. N44 is a glycosylation site (N-linked (GlcNAc...) asparagine). 4 disulfides stabilise this stretch: C50-C110, C64-C123, C82-C138, and C89-C98. Y60 is subject to 3'-nitrotyrosine. Residue 65–69 (KNQNT) coordinates substrate. N-linked (GlcNAc...) asparagine glycosylation is found at N86, N92, N111, and N119. H156 (proton donor) is an active-site residue.

The protein belongs to the pancreatic ribonuclease family. As to quaternary structure, interacts with and forms a tight 1:1 complex with RNH1. Dimerization of two such complexes may occur.

Its subcellular location is the lysosome. It localises to the cytoplasmic granule. It carries out the reaction an [RNA] containing cytidine + H2O = an [RNA]-3'-cytidine-3'-phosphate + a 5'-hydroxy-ribonucleotide-3'-[RNA].. It catalyses the reaction an [RNA] containing uridine + H2O = an [RNA]-3'-uridine-3'-phosphate + a 5'-hydroxy-ribonucleotide-3'-[RNA].. Functionally, this is a non-secretory ribonuclease. It is a pyrimidine specific nuclease with a slight preference for U. Cytotoxin and helminthotoxin. Possesses a wide variety of biological activities. In Gorilla gorilla gorilla (Western lowland gorilla), this protein is Non-secretory ribonuclease (RNASE2).